Here is a 473-residue protein sequence, read N- to C-terminus: MNINMKDNFKKWLDLQQKKTLLKFLTCGSVDDGKSTLIGRLLHDTKQIYDDQLFFLKSDSKRHGTQGNEIDLALVVDGLQSEREQGITIDVAYRYFSTNKRKFIIADTPGHEQYTRNMATGASTCDLSILLVDARKGLSEQTYRHSFISTLLGIKYLIVAINKMDLVNYKQEIFENIKKDFLIFSKKLANDLNIIFIPMSALLGENIVFKTKLMPWYQGVTLLSFLETIKIKNSISSEELRFPVQYINRPNSDFRGYSGILLSGRMHVGQTIKILPENINSRVSRIVTFDKELKKAEIGESITVVLKDEIDINRGDFFVNIDSILQPSQEAIIDIVWMTDNILLAGESYNVKLSGKKIRVYIKEILFKLDVNTLKKVKSHSLVLNSIGRVKIYFSKPVIFDNYSENRMTGNMIFIDLLTNITVGAGMIVNSLDKKGKIPSNKQKDFESDFYDLIIRHFPHWNIPKILMKKVYK.

Residues 19 to 238 (KTLLKFLTCG…IKIKNSISSE (220 aa)) enclose the tr-type G domain. Positions 28–35 (GSVDDGKS) are G1. Position 28 to 35 (28 to 35 (GSVDDGKS)) interacts with GTP. Positions 86 to 90 (GITID) are G2. The interval 107–110 (DTPG) is G3. GTP is bound by residues 107–111 (DTPGH) and 162–165 (NKMD). The segment at 162–165 (NKMD) is G4. The tract at residues 200-202 (SAL) is G5.

This sequence belongs to the TRAFAC class translation factor GTPase superfamily. Classic translation factor GTPase family. CysN/NodQ subfamily. Heterodimer composed of CysD, the smaller subunit, and CysN.

The enzyme catalyses sulfate + ATP + H(+) = adenosine 5'-phosphosulfate + diphosphate. Its pathway is sulfur metabolism; hydrogen sulfide biosynthesis; sulfite from sulfate: step 1/3. Functionally, with CysD forms the ATP sulfurylase (ATPS) that catalyzes the adenylation of sulfate producing adenosine 5'-phosphosulfate (APS) and diphosphate, the first enzymatic step in sulfur assimilation pathway. APS synthesis involves the formation of a high-energy phosphoric-sulfuric acid anhydride bond driven by GTP hydrolysis by CysN coupled to ATP hydrolysis by CysD. This Buchnera aphidicola subsp. Acyrthosiphon pisum (strain APS) (Acyrthosiphon pisum symbiotic bacterium) protein is Sulfate adenylyltransferase subunit 1.